The primary structure comprises 434 residues: Serine/threonine-protein kinase Sgk1-A (434 aa).

Positions 66-94 (PQEPELLNENSSPPPSPSQQINLGPSSNP) are disordered. Polar residues predominate over residues 84–94 (QQINLGPSSNP). Positions 101–358 (FQFLKIIGKG…FMEIKNHIFF (258 aa)) constitute a Protein kinase domain. Residues 107 to 115 (IGKGSFGKV) and Lys130 each bind ATP. Residue Asp225 is the Proton acceptor of the active site. One can recognise an AGC-kinase C-terminal domain in the interval 359–434 (SPINWDDLIN…SYAPPMESYL (76 aa)).

This sequence belongs to the protein kinase superfamily. AGC Ser/Thr protein kinase family.

The protein localises to the cytoplasm. The protein resides in the nucleus. It localises to the endoplasmic reticulum. The enzyme catalyses L-seryl-[protein] + ATP = O-phospho-L-seryl-[protein] + ADP + H(+). The catalysed reaction is L-threonyl-[protein] + ATP = O-phospho-L-threonyl-[protein] + ADP + H(+). Protein kinase that may play an important role in cellular stress response. Plays an important role in activating certain potassium, sodium, and chloride channels, suggesting an involvement in the regulation of processes such as cell survival, neuronal excitability, and renal sodium excretion. In Xenopus laevis (African clawed frog), this protein is Serine/threonine-protein kinase Sgk1-A (sgk1-a).